Here is a 1486-residue protein sequence, read N- to C-terminus: Chromosome partition protein MukB (1486 aa).

ATP is bound at residue 34–41; it reads GGNGAGKS. 3 coiled-coil regions span residues 326–418, 444–480, and 509–603; these read LEAD…QYNQ, LETF…QAYQ, and RHLA…RAPV. The flexible hinge stretch occupies residues 666 to 783; sequence PGGSEDQRLN…EVPLFGRAAR (118 aa). 3 coiled-coil regions span residues 835–923, 977–1115, and 1209–1266; these read EAEI…AKLE, EMLS…TAKA, and VEAI…QNVS.

It belongs to the SMC family. MukB subfamily. In terms of assembly, homodimerization via its hinge domain. Binds to DNA via its C-terminal region. Interacts, and probably forms a ternary complex, with MukE and MukF via its C-terminal region. The complex formation is stimulated by calcium or magnesium. Interacts with tubulin-related protein FtsZ.

The protein resides in the cytoplasm. It is found in the nucleoid. Functionally, plays a central role in chromosome condensation, segregation and cell cycle progression. Functions as a homodimer, which is essential for chromosome partition. Involved in negative DNA supercoiling in vivo, and by this means organize and compact chromosomes. May achieve or facilitate chromosome segregation by condensation DNA from both sides of a centrally located replisome during cell division. The chain is Chromosome partition protein MukB from Escherichia coli (strain 55989 / EAEC).